Consider the following 491-residue polypeptide: Protein phosphatase ppm-1.G (491 aa).

Residues 23–486 form the PPM-type phosphatase domain; the sequence is SYACTTMQGW…DNMTVICTTF (464 aa). 2 residues coordinate Mn(2+): D57 and G58. Over residues 112–125 the composition is skewed to basic and acidic residues; the sequence is KDIGDEGKPKKAGG. Disordered regions lie at residues 112–136 and 170–294; these read KDIG…ADRI and GDVS…EEMV. Acidic residues-rich tracts occupy residues 173-192 and 260-294; these read SDDS…QDDT and ATEE…EEMV. Mn(2+)-binding residues include D428 and D477.

This sequence belongs to the PP2C family. The cofactor is Mg(2+). It depends on Mn(2+) as a cofactor.

The enzyme catalyses O-phospho-L-seryl-[protein] + H2O = L-seryl-[protein] + phosphate. The catalysed reaction is O-phospho-L-threonyl-[protein] + H2O = L-threonyl-[protein] + phosphate. The sequence is that of Protein phosphatase ppm-1.G from Caenorhabditis elegans.